A 428-amino-acid chain; its full sequence is Adenylosuccinate synthetase (428 aa).

GTP contacts are provided by residues 12–18 and 40–42; these read GDEGKGK and GHS. D13 (proton acceptor) is an active-site residue. Mg(2+) is bound by residues D13 and G40. IMP-binding positions include 13–16, 38–41, T128, R142, Q223, T238, and R302; these read DEGK and NAGH. H41 acts as the Proton donor in catalysis. 298 to 304 is a substrate binding site; the sequence is VTTGRPR. Residues R304, 330 to 332, and 412 to 414 each bind GTP; these read KLD and GTG.

It belongs to the adenylosuccinate synthetase family. Homodimer. Requires Mg(2+) as cofactor.

The protein resides in the cytoplasm. It carries out the reaction IMP + L-aspartate + GTP = N(6)-(1,2-dicarboxyethyl)-AMP + GDP + phosphate + 2 H(+). Its pathway is purine metabolism; AMP biosynthesis via de novo pathway; AMP from IMP: step 1/2. Plays an important role in the de novo pathway of purine nucleotide biosynthesis. Catalyzes the first committed step in the biosynthesis of AMP from IMP. The sequence is that of Adenylosuccinate synthetase from Bifidobacterium longum (strain DJO10A).